The chain runs to 160 residues: Serine-protein kinase RsbW (160 aa).

Belongs to the anti-sigma-factor family.

The catalysed reaction is L-seryl-[protein] + ATP = O-phospho-L-seryl-[protein] + ADP + H(+). It catalyses the reaction L-threonyl-[protein] + ATP = O-phospho-L-threonyl-[protein] + ADP + H(+). Its function is as follows. Negative regulator of sigma-B activity. Phosphorylates and inactivates its specific antagonist protein, RsbV. Upon phosphorylation of RsbV, RsbW is released and binds to sigma-B, thereby blocking its ability to form an RNA polymerase holoenzyme (E-sigma-B). The polypeptide is Serine-protein kinase RsbW (Bacillus cereus (strain G9842)).